The chain runs to 177 residues: Nucleoside triphosphate/diphosphate phosphatase (177 aa).

Residue R23 is the Proton donor of the active site. Mg(2+)-binding residues include N87, D103, D105, D107, D120, and E123.

This sequence belongs to the Ntdp family. Mg(2+) serves as cofactor.

The catalysed reaction is a ribonucleoside 5'-triphosphate + H2O = a ribonucleoside 5'-diphosphate + phosphate + H(+). It carries out the reaction a ribonucleoside 5'-diphosphate + H2O = a ribonucleoside 5'-phosphate + phosphate + H(+). Has nucleoside phosphatase activity towards nucleoside triphosphates and nucleoside diphosphates. The chain is Nucleoside triphosphate/diphosphate phosphatase from Streptococcus mutans serotype c (strain ATCC 700610 / UA159).